The chain runs to 235 residues: 2,3,4,5-tetrahydropyridine-2,6-dicarboxylate N-acetyltransferase (235 aa).

It belongs to the transferase hexapeptide repeat family. DapH subfamily.

It carries out the reaction (S)-2,3,4,5-tetrahydrodipicolinate + acetyl-CoA + H2O = L-2-acetamido-6-oxoheptanedioate + CoA. Its pathway is amino-acid biosynthesis; L-lysine biosynthesis via DAP pathway; LL-2,6-diaminopimelate from (S)-tetrahydrodipicolinate (acetylase route): step 1/3. In terms of biological role, catalyzes the transfer of an acetyl group from acetyl-CoA to tetrahydrodipicolinate. This is 2,3,4,5-tetrahydropyridine-2,6-dicarboxylate N-acetyltransferase from Anoxybacillus flavithermus (strain DSM 21510 / WK1).